The sequence spans 57 residues: Metallothionein (57 aa).

It belongs to the metallothionein superfamily. Type 14 family.

This protein complexes cadmium, zinc and copper. The protein is Metallothionein (mtnA) of Thermostichus vulcanus (Synechococcus vulcanus).